Reading from the N-terminus, the 284-residue chain is Bifunctional protein FolD 1 (284 aa).

NADP(+) is bound by residues 166–168 and Ile232; that span reads GAS.

It belongs to the tetrahydrofolate dehydrogenase/cyclohydrolase family. Homodimer.

It catalyses the reaction (6R)-5,10-methylene-5,6,7,8-tetrahydrofolate + NADP(+) = (6R)-5,10-methenyltetrahydrofolate + NADPH. The enzyme catalyses (6R)-5,10-methenyltetrahydrofolate + H2O = (6R)-10-formyltetrahydrofolate + H(+). It participates in one-carbon metabolism; tetrahydrofolate interconversion. Functionally, catalyzes the oxidation of 5,10-methylenetetrahydrofolate to 5,10-methenyltetrahydrofolate and then the hydrolysis of 5,10-methenyltetrahydrofolate to 10-formyltetrahydrofolate. The sequence is that of Bifunctional protein FolD 1 from Pseudomonas savastanoi pv. phaseolicola (strain 1448A / Race 6) (Pseudomonas syringae pv. phaseolicola (strain 1448A / Race 6)).